Here is a 388-residue protein sequence, read N- to C-terminus: Mitochondrial distribution and morphology protein 12 (388 aa).

The 388-residue stretch at 1 to 388 (MSLDINWSLL…VFPNFHTVAL (388 aa)) folds into the SMP-LTD domain. Disordered regions lie at residues 75 to 101 (DDEG…RNEA) and 209 to 249 (PMSI…KVSS). Residues 83–101 (EEKQREKEREERDKLRNEA) are compositionally biased toward basic and acidic residues. Residues 234-243 (PSPPAHPAGL) show a composition bias toward pro residues.

This sequence belongs to the MDM12 family. In terms of assembly, component of the ER-mitochondria encounter structure (ERMES) or MDM complex, composed of MMM1, MDM10, MDM12 and MDM34. An MMM1 homodimer associates with one molecule of MDM12 on each side in a pairwise head-to-tail manner, and the SMP-LTD domains of MMM1 and MDM12 generate a continuous hydrophobic tunnel for phospholipid trafficking.

The protein resides in the mitochondrion outer membrane. The protein localises to the endoplasmic reticulum membrane. Functionally, component of the ERMES/MDM complex, which serves as a molecular tether to connect the endoplasmic reticulum (ER) and mitochondria. Components of this complex are involved in the control of mitochondrial shape and protein biogenesis, and function in nonvesicular lipid trafficking between the ER and mitochondria. MDM12 is required for the interaction of the ER-resident membrane protein MMM1 and the outer mitochondrial membrane-resident beta-barrel protein MDM10. The MDM12-MMM1 subcomplex functions in the major beta-barrel assembly pathway that is responsible for biogenesis of all mitochondrial outer membrane beta-barrel proteins, and acts in a late step after the SAM complex. The MDM10-MDM12-MMM1 subcomplex further acts in the TOM40-specific pathway after the action of the MDM12-MMM1 complex. Essential for establishing and maintaining the structure of mitochondria and maintenance of mtDNA nucleoids. This is Mitochondrial distribution and morphology protein 12 from Cryptococcus neoformans var. neoformans serotype D (strain JEC21 / ATCC MYA-565) (Filobasidiella neoformans).